A 546-amino-acid polypeptide reads, in one-letter code: Chaperonin GroEL (546 aa).

ATP contacts are provided by residues 29–32 (TLGP), Lys-50, 86–90 (DGTTT), Gly-415, and Asp-495.

Belongs to the chaperonin (HSP60) family. Forms a cylinder of 14 subunits composed of two heptameric rings stacked back-to-back. Interacts with the co-chaperonin GroES.

Its subcellular location is the cytoplasm. It carries out the reaction ATP + H2O + a folded polypeptide = ADP + phosphate + an unfolded polypeptide.. In terms of biological role, together with its co-chaperonin GroES, plays an essential role in assisting protein folding. The GroEL-GroES system forms a nano-cage that allows encapsulation of the non-native substrate proteins and provides a physical environment optimized to promote and accelerate protein folding. The polypeptide is Chaperonin GroEL (Parabacteroides distasonis (strain ATCC 8503 / DSM 20701 / CIP 104284 / JCM 5825 / NCTC 11152)).